We begin with the raw amino-acid sequence, 429 residues long: Histidinol dehydrogenase (429 aa).

Y127, Q188, and N211 together coordinate NAD(+). Positions 234, 256, and 259 each coordinate substrate. The Zn(2+) site is built by Q256 and H259. Residues E324 and H325 each act as proton acceptor in the active site. Substrate is bound by residues H325, D358, E412, and H417. Position 358 (D358) interacts with Zn(2+). H417 provides a ligand contact to Zn(2+).

Belongs to the histidinol dehydrogenase family. Zn(2+) serves as cofactor.

It catalyses the reaction L-histidinol + 2 NAD(+) + H2O = L-histidine + 2 NADH + 3 H(+). It participates in amino-acid biosynthesis; L-histidine biosynthesis; L-histidine from 5-phospho-alpha-D-ribose 1-diphosphate: step 9/9. Functionally, catalyzes the sequential NAD-dependent oxidations of L-histidinol to L-histidinaldehyde and then to L-histidine. The sequence is that of Histidinol dehydrogenase from Bacillus cereus (strain ATCC 14579 / DSM 31 / CCUG 7414 / JCM 2152 / NBRC 15305 / NCIMB 9373 / NCTC 2599 / NRRL B-3711).